Consider the following 407-residue polypeptide: Wilms tumor protein homolog B (407 aa).

Glycyl lysine isopeptide (Lys-Gly) (interchain with G-Cter in SUMO) cross-links involve residues Lys-55 and Lys-158. The 9aaTAD signature appears at 213-221 (MTWNQMNLG). 4 consecutive C2H2-type zinc fingers follow at residues 284 to 308 (FMCA…SRKH), 314 to 338 (YQCD…QRRH), 344 to 366 (FQCK…TRTH), and 372 to 396 (FSCR…HNMH). Important for interaction with target DNA stretches follow at residues 328–342 (SDQL…TGVK) and 354–362 (SRSDHLKTH).

It belongs to the EGR C2H2-type zinc-finger protein family. In terms of tissue distribution, expressed in the pronephric anlage from stage 23 to 30. Also expressed in the adult kidney (mesonephros) and in testis.

The protein localises to the nucleus. It localises to the cytoplasm. Its subcellular location is the nucleus speckle. Functionally, transcription factor required for development of the vascular component of the pronephric kidney, the glomus; may repress tubule-specific gene expression in the portion of the pronephros fated to form the glomus. Recognizes and binds to the DNA sequence 5'-GCG(T/G)GGGCG-3'. Inhibits Wnt-signaling during embryonic development. This is Wilms tumor protein homolog B (wt1-b) from Xenopus laevis (African clawed frog).